The sequence spans 72 residues: Beta-defensin 104 (72 aa).

Positions 1 to 22 (MQRLVLLLAISLLLYQDLPVRS) are cleaved as a signal peptide. 3 disulfides stabilise this stretch: cysteine 30–cysteine 57, cysteine 37–cysteine 51, and cysteine 41–cysteine 58.

Belongs to the beta-defensin family. In terms of tissue distribution, high expression in the testis. Gastric antrum exhibited relatively high levels. A lower expression is observed in uterus and neutrophils thyroid gland, lung, and kidney. No detectable expression in other tissues tested.

It is found in the secreted. Functionally, has antimicrobial activity. Synergistic effects with lysozyme and DEFB103. The sequence is that of Beta-defensin 104 (DEFB104A) from Homo sapiens (Human).